The following is a 358-amino-acid chain: Peptide chain release factor 1 (358 aa).

N5-methylglutamine is present on Gln-237.

It belongs to the prokaryotic/mitochondrial release factor family. In terms of processing, methylated by PrmC. Methylation increases the termination efficiency of RF1.

The protein localises to the cytoplasm. Functionally, peptide chain release factor 1 directs the termination of translation in response to the peptide chain termination codons UAG and UAA. The sequence is that of Peptide chain release factor 1 from Streptomyces avermitilis (strain ATCC 31267 / DSM 46492 / JCM 5070 / NBRC 14893 / NCIMB 12804 / NRRL 8165 / MA-4680).